We begin with the raw amino-acid sequence, 154 residues long: uncharacterized protein (154 aa).

The next 4 helical transmembrane spans lie at 39 to 61 (LLIFGSIAIAYTVIYISGLFFAR), 65 to 87 (LPYIRKILEIGISVIFYFLVSLL), 94 to 113 (VESLLLLKTLFLVQTIRVFI), and 128 to 150 (LLINIFSILGGISFFIIKLSPFT).

The protein resides in the cell membrane. This is an uncharacterized protein from Aquifex aeolicus (strain VF5).